A 160-amino-acid polypeptide reads, in one-letter code: SsrA-binding protein (160 aa).

This sequence belongs to the SmpB family.

The protein resides in the cytoplasm. In terms of biological role, required for rescue of stalled ribosomes mediated by trans-translation. Binds to transfer-messenger RNA (tmRNA), required for stable association of tmRNA with ribosomes. tmRNA and SmpB together mimic tRNA shape, replacing the anticodon stem-loop with SmpB. tmRNA is encoded by the ssrA gene; the 2 termini fold to resemble tRNA(Ala) and it encodes a 'tag peptide', a short internal open reading frame. During trans-translation Ala-aminoacylated tmRNA acts like a tRNA, entering the A-site of stalled ribosomes, displacing the stalled mRNA. The ribosome then switches to translate the ORF on the tmRNA; the nascent peptide is terminated with the 'tag peptide' encoded by the tmRNA and targeted for degradation. The ribosome is freed to recommence translation, which seems to be the essential function of trans-translation. In Cronobacter sakazakii (strain ATCC BAA-894) (Enterobacter sakazakii), this protein is SsrA-binding protein.